Reading from the N-terminus, the 448-residue chain is Glutamyl-tRNA reductase (448 aa).

Substrate contacts are provided by residues 52-55 (TCNR), serine 105, 110-112 (EDQ), and glutamine 116. Cysteine 53 (nucleophile) is an active-site residue. Residue 184–189 (GAGEMG) coordinates NADP(+). Residues 406–435 (DPDFGGPDQATPPEFTKGMSVEDIPDGMRD) form a disordered region.

Belongs to the glutamyl-tRNA reductase family. In terms of assembly, homodimer.

The catalysed reaction is (S)-4-amino-5-oxopentanoate + tRNA(Glu) + NADP(+) = L-glutamyl-tRNA(Glu) + NADPH + H(+). The protein operates within porphyrin-containing compound metabolism; protoporphyrin-IX biosynthesis; 5-aminolevulinate from L-glutamyl-tRNA(Glu): step 1/2. Functionally, catalyzes the NADPH-dependent reduction of glutamyl-tRNA(Glu) to glutamate 1-semialdehyde (GSA). The chain is Glutamyl-tRNA reductase from Haloarcula marismortui (strain ATCC 43049 / DSM 3752 / JCM 8966 / VKM B-1809) (Halobacterium marismortui).